We begin with the raw amino-acid sequence, 309 residues long: MVGHTESDVPPTMAVKIFSAGVAACVADIITFPLDTAKVRLQVGSAIQGECLISSAIRYKGVLGTIITLAKTEGPVKLYSGLPAGLQRQISFASLRIGLYDTVQEFFTTGKEASLGSKISAGLMTGGVAVFIGQPTEVVKVRLQAQSHLHGPKPRYTGTYNAYRIIATTEGLTGLWKGTTPNLTRNVIINCTELVTYDLMKEALVKNKLLADDVPCHFVSAVVAGFCTTVLSSPVDVVKTRFVNSSPGQYTSVPNCAMMMLTREGPSAFFKGFVPSFLRLGSWNIIMFVCFEQLKQELMKSRHTMDCAT.

Residues 2 to 10 lie on the Mitochondrial intermembrane side of the membrane; it reads VGHTESDVP. A helical membrane pass occupies residues 11 to 32; that stretch reads PTMAVKIFSAGVAACVADIITF. 3 Solcar repeats span residues 11–106, 113–203, and 212–297; these read PTMA…VQEF, ASLG…MKEA, and DDVP…LKQE. At 33 to 77 the chain is on the mitochondrial matrix side; it reads PLDTAKVRLQVGSAIQGECLISSAIRYKGVLGTIITLAKTEGPVK. Fatty acid 16:0 is bound at residue lysine 60. Residues 78–100 form a helical membrane-spanning segment; it reads LYSGLPAGLQRQISFASLRIGLY. Residues 101–118 lie on the Mitochondrial intermembrane side of the membrane; that stretch reads DTVQEFFTTGKEASLGSK. A helical transmembrane segment spans residues 119-135; that stretch reads ISAGLMTGGVAVFIGQP. The Mitochondrial matrix portion of the chain corresponds to 136–180; it reads TEVVKVRLQAQSHLHGPKPRYTGTYNAYRIIATTEGLTGLWKGTT. A helical transmembrane segment spans residues 181 to 197; sequence PNLTRNVIINCTELVTY. Topologically, residues 198-214 are mitochondrial intermembrane; that stretch reads DLMKEALVKNKLLADDV. The helical transmembrane segment at 215-234 threads the bilayer; that stretch reads PCHFVSAVVAGFCTTVLSSP. Residues 235-268 are Mitochondrial matrix-facing; sequence VDVVKTRFVNSSPGQYTSVPNCAMMMLTREGPSA. Position 256 is a cysteine sulfenic acid (-SOH) (cysteine 256). A helical membrane pass occupies residues 269-291; that stretch reads FFKGFVPSFLRLGSWNIIMFVCF. Residue lysine 271 participates in fatty acid 16:0 binding. At 292–309 the chain is on the mitochondrial intermembrane side; the sequence is EQLKQELMKSRHTMDCAT.

The protein belongs to the mitochondrial carrier (TC 2.A.29) family. Most probably functions as a monomer. Binds one purine nucleotide per monomer. However, has also been suggested to function as a homodimer or a homotetramer. Tightly associates with cardiolipin in the mitochondrion inner membrane; may stabilize and regulate its activity. In terms of processing, may undergo sulfenylation upon cold exposure. May increase the sensitivity of UCP1 thermogenic function to the activation by noradrenaline probably through structural effects. Post-translationally, may undergo ubiquitin-mediated proteasomal degradation.

It is found in the mitochondrion inner membrane. It carries out the reaction H(+)(in) = H(+)(out). Has no constitutive proton transporter activity and has to be activated by long-chain fatty acids/LCFAs. Inhibited by purine nucleotides. Both purine nucleotides and LCFAs bind the cytosolic side of the transporter and directly compete to activate or inhibit it. Activated by noradrenaline and reactive oxygen species. Despite lacking canonical translational encoding for selenocysteine, a small pool of the protein has been observed to selectively incorporate selenocysteine at 'Cys-256'. Selenocysteine-modified protein is highly sensitive to redox modification and may constitute a pool of protein highly sensitive to activation by elevated levels of reactive oxygen species (ROS). Functionally, mitochondrial protein responsible for thermogenic respiration, a specialized capacity of brown adipose tissue and beige fat that participates in non-shivering adaptive thermogenesis to temperature and diet variations and more generally to the regulation of energy balance. Functions as a long-chain fatty acid/LCFA and proton symporter, simultaneously transporting one LCFA and one proton through the inner mitochondrial membrane. However, LCFAs remaining associated with the transporter via their hydrophobic tails, it results in an apparent transport of protons activated by LCFAs. Thereby, dissipates the mitochondrial proton gradient and converts the energy of substrate oxydation into heat instead of ATP. Regulates the production of reactive oxygen species/ROS by mitochondria. This is Mitochondrial brown fat uncoupling protein 1 from Bos taurus (Bovine).